We begin with the raw amino-acid sequence, 675 residues long: Regulator of G-protein signaling 9 (675 aa).

Residues 30-105 (PETGVRMHNQ…PDSSLYRFQT (76 aa)) form the DEP domain. Residues 222-283 (VRKEIMYYQQ…DTQFWDLNAK (62 aa)) enclose the G protein gamma domain. An RGS domain is found at 299-414 (NFSELIRDPK…LKSPIYKEML (116 aa)). Disordered stretches follow at residues 524–571 (RVAL…PPKA) and 637–662 (DSGT…EKEV). The span at 542–551 (SGANSGPSVT) shows a compositional bias: polar residues. 2 stretches are compositionally biased toward basic and acidic residues: residues 552 to 562 (ENREPSADHSR) and 646 to 662 (DDPR…EKEV).

Heterodimer with GNB5. Interacts with RGS7BP, leading to regulate the subcellular location of the heterodimer formed with GNB5. Component of the RGS9-1-Gbeta5 complex composed of RGS9 (RGS9-1), Gbeta5 (GNB5) and RGS9BP. Interacts with PDE6G and GNAT1. Retinal isoform 1 is light-dependent phosphorylated at 'Ser-475'. Phosphorylation is decreased by light exposition. Interaction with RGS9BP is decreased when isoform 1 is phosphorylated at 'Ser-475'. Isoform 1 is expressed in photoreceptor outer segments. Isoform 2 is expressed in brain striatum.

The protein localises to the membrane. Functionally, inhibits signal transduction by increasing the GTPase activity of G protein alpha subunits thereby driving them into their inactive GDP-bound form. Binds to GNAT1. Involved in phototransduction; key element in the recovery phase of visual transduction. In Mus musculus (Mouse), this protein is Regulator of G-protein signaling 9 (Rgs9).